The primary structure comprises 319 residues: Thioredoxin reductase (319 aa).

FAD contacts are provided by residues 11–14, 40–41, glutamine 45, asparagine 54, valine 87, cysteine 145, aspartate 288, and 295–297; these read SGPA, VA, and RQA. Cysteine 142 and cysteine 145 are oxidised to a cystine.

It belongs to the class-II pyridine nucleotide-disulfide oxidoreductase family. As to quaternary structure, homodimer. The cofactor is FAD.

The protein localises to the cytoplasm. The enzyme catalyses [thioredoxin]-dithiol + NADP(+) = [thioredoxin]-disulfide + NADPH + H(+). The chain is Thioredoxin reductase (TRR1) from Eremothecium gossypii (strain ATCC 10895 / CBS 109.51 / FGSC 9923 / NRRL Y-1056) (Yeast).